Reading from the N-terminus, the 837-residue chain is Outer membrane usher protein HifC (837 aa).

Residues 1 to 26 (MKTKIFPLNKIAFACSLLLANPLAWA) form the signal peptide. A disulfide bridge connects residues C813 and C833.

This sequence belongs to the fimbrial export usher family.

The protein localises to the cell outer membrane. Essential for piliation. The protein is Outer membrane usher protein HifC (hifC) of Haemophilus influenzae.